We begin with the raw amino-acid sequence, 811 residues long: Vacuolar protein sorting-associated protein 70 (811 aa).

Residues Met-1–Thr-21 show a composition bias toward basic and acidic residues. Residues Met-1–Arg-63 form a disordered region. The N-linked (GlcNAc...) asparagine glycan is linked to Asn-55. The helical transmembrane segment at Phe-90 to Pro-110 threads the bilayer. N-linked (GlcNAc...) asparagine glycosylation is present at Asn-237. The segment at Phe-334 to Ser-367 is disordered. The span at Asp-336–Gly-345 shows a compositional bias: low complexity. Residues His-445, Asp-456, and Asp-522 each coordinate Zn(2+). N-linked (GlcNAc...) asparagine glycans are attached at residues Asn-568 and Asn-599. His-607 serves as a coordination point for Zn(2+). An N-linked (GlcNAc...) asparagine glycan is attached at Asn-670.

It belongs to the peptidase M28 family. M28B subfamily. Zn(2+) is required as a cofactor.

Its subcellular location is the membrane. Its function is as follows. Involved in vacuolar protein sorting. In Saccharomyces cerevisiae (strain ATCC 204508 / S288c) (Baker's yeast), this protein is Vacuolar protein sorting-associated protein 70 (VPS70).